Reading from the N-terminus, the 630-residue chain is MDIKGQFWNDDDSEGDNESEEFLYGVQGSCAADLYRHPQLDADIEAVKEIYSENSVSIREYGTIDDVDLDLHINISFLDEEVSTAWKVLRTEPIVLRLRFSLSQYLDGPEPSIEVFQPSNKEGFGLGLQLKKILCMFTSQQWKHLSNDFLKTQQEKRHSWFKASGTIKKFRAGLSIFSPIPKSPSFPIIQDSMLKGKLGVPELRVGRLMNRSISCTMKNPKVEVFGYPPSPQAGLLCPQHVGLPPPARTSPLVSGHCKNIPTLEYGFLVQIMKYAEQRIPTLNEYCVVCDEQHVFQNGSMLKPAVCTRELCVFSFYTLGVMSGAAEEVATGAEVVDLQVAMCRAALESPRKSIIFEPYPSVVDPTDPKTLAFNPKKKNYERLQKALDSVMSIREMTQGSYLEIKKQMDKLDPLAHPLLQWIISSNRSHIVKLPLSRLKFMHTSHQFLLLSSPPAKEARFRTAKKLYGSTFAFHGSHIENWHSILRNGLVNASYTKLQLHGAAYGKGIYLSPISSISFGYSGMGKGQHRMPSKDELVQRYNRMNTIPQTRSIQSRFLQSRNLNCIALCEVITSKDLQKHGNIWVCPVSDHVCTRFFFVYEDGQVGDANINTQDPKIQKEIMRVIGTQVYTN.

Cys-237 carries the ADP-ribosylcysteine modification. The PARP catalytic domain occupies 394–620; that stretch reads EMTQGSYLEI…QDPKIQKEIM (227 aa). Asp-600 carries the ADP-ribosyl aspartic acid modification.

It belongs to the ARTD/PARP family. Auto-mono-ADP-ribosylated.

The catalysed reaction is L-aspartyl-[protein] + NAD(+) = 4-O-(ADP-D-ribosyl)-L-aspartyl-[protein] + nicotinamide. It catalyses the reaction L-cysteinyl-[protein] + NAD(+) = S-(ADP-D-ribosyl)-L-cysteinyl-[protein] + nicotinamide + H(+). Mono-ADP-ribosyltransferase that mediates mono-ADP-ribosylation of target proteins. The chain is Protein mono-ADP-ribosyltransferase PARP6 from Mus musculus (Mouse).